The chain runs to 90 residues: Small ribosomal subunit protein bS20 (90 aa).

The protein belongs to the bacterial ribosomal protein bS20 family.

In terms of biological role, binds directly to 16S ribosomal RNA. The sequence is that of Small ribosomal subunit protein bS20 from Mesomycoplasma hyopneumoniae (strain 232) (Mycoplasma hyopneumoniae).